We begin with the raw amino-acid sequence, 263 residues long: Ribosomal RNA large subunit methyltransferase E (263 aa).

S-adenosyl-L-methionine-binding residues include G50, W52, D68, N84, and D109. The Proton acceptor role is filled by K149. Positions 196 to 254 constitute a TRAM domain; the sequence is PLRKGDKFVVDIEKLGSSGDGAVLIEGFVVFVKEVEVGEKVRIKITDVKPNFAFADVAE.

The protein belongs to the class I-like SAM-binding methyltransferase superfamily. RNA methyltransferase RlmE family.

The protein localises to the cytoplasm. The catalysed reaction is uridine(2552) in 23S rRNA + S-adenosyl-L-methionine = 2'-O-methyluridine(2552) in 23S rRNA + S-adenosyl-L-homocysteine + H(+). In terms of biological role, specifically methylates the uridine in position 2552 of 23S rRNA at the 2'-O position of the ribose in the fully assembled 50S ribosomal subunit. This is Ribosomal RNA large subunit methyltransferase E from Methanosarcina barkeri (strain Fusaro / DSM 804).